Consider the following 179-residue polypeptide: Adenine phosphoribosyltransferase (179 aa).

Belongs to the purine/pyrimidine phosphoribosyltransferase family. As to quaternary structure, homodimer.

It is found in the cytoplasm. The catalysed reaction is AMP + diphosphate = 5-phospho-alpha-D-ribose 1-diphosphate + adenine. It functions in the pathway purine metabolism; AMP biosynthesis via salvage pathway; AMP from adenine: step 1/1. Its function is as follows. Catalyzes a salvage reaction resulting in the formation of AMP, that is energically less costly than de novo synthesis. The sequence is that of Adenine phosphoribosyltransferase from Helicobacter acinonychis (strain Sheeba).